The chain runs to 394 residues: Probable peptidoglycan glycosyltransferase FtsW (394 aa).

Residues 1–27 are Cytoplasmic-facing; the sequence is MSALRSVAGLLQRWLLPARPAGLYDRQ. Residues 28–48 traverse the membrane as a helical segment; it reads LVVLALALMAVGLVIVASASI. Residues 49 to 64 are Periplasmic-facing; that stretch reads PEGIAINNDPFMFVKR. A helical membrane pass occupies residues 65–85; the sequence is HGLFLVMALGISWFVLQVPMA. Over 86-88 the chain is Cytoplasmic; sequence RWQ. The chain crosses the membrane as a helical span at residues 89–109; sequence HYNGPMLVLAILMLVLVLLVG. Over 110-123 the chain is Periplasmic; that stretch reads RSVNGSIRWLPLGP. The chain crosses the membrane as a helical span at residues 124–144; that stretch reads FNLQPAEFGKLALFVYLAGYL. Topologically, residues 145–154 are cytoplasmic; it reads VRRQSEVRER. The helical transmembrane segment at 155-175 threads the bilayer; the sequence is FIGFMKPMAVLFVVAILLLAQ. Proline 176 is a topological domain (periplasmic). The helical transmembrane segment at 177–197 threads the bilayer; it reads DLGSVVVMFVTSLGMLFLAGA. A topological domain (cytoplasmic) is located at residue arginine 198. A helical transmembrane segment spans residues 199–219; sequence LGQFIGLILVGVSAVVTLVIA. Residues 220-279 lie on the Periplasmic side of the membrane; the sequence is EPYRMRRVTSFLDPWADPFGSGYQLTQSLMAFGRGSWFGEGLGNSIQKMEYLPEAHTDFV. Residues 280 to 300 form a helical membrane-spanning segment; the sequence is FAILGEELGYAGVLGALFLIF. At 301 to 322 the chain is on the cytoplasmic side; it reads ALSFKALKLGHQALVAERLYEG. Residues 323 to 343 traverse the membrane as a helical segment; the sequence is YLAIGIGIWFSFQTFVNVGAA. The Periplasmic segment spans residues 344–354; that stretch reads SGMMPTKGLTL. The chain crosses the membrane as a helical span at residues 355-375; sequence PLVSYGGSSLIIMMVAVSMLV. Residues 376-394 lie on the Cytoplasmic side of the membrane; it reads RIDFELRQASAQARVREVS.

Belongs to the SEDS family. FtsW subfamily.

It is found in the cell inner membrane. It catalyses the reaction [GlcNAc-(1-&gt;4)-Mur2Ac(oyl-L-Ala-gamma-D-Glu-L-Lys-D-Ala-D-Ala)](n)-di-trans,octa-cis-undecaprenyl diphosphate + beta-D-GlcNAc-(1-&gt;4)-Mur2Ac(oyl-L-Ala-gamma-D-Glu-L-Lys-D-Ala-D-Ala)-di-trans,octa-cis-undecaprenyl diphosphate = [GlcNAc-(1-&gt;4)-Mur2Ac(oyl-L-Ala-gamma-D-Glu-L-Lys-D-Ala-D-Ala)](n+1)-di-trans,octa-cis-undecaprenyl diphosphate + di-trans,octa-cis-undecaprenyl diphosphate + H(+). It functions in the pathway cell wall biogenesis; peptidoglycan biosynthesis. Functionally, peptidoglycan polymerase that is essential for cell division. The sequence is that of Probable peptidoglycan glycosyltransferase FtsW from Aeromonas salmonicida (strain A449).